A 449-amino-acid polypeptide reads, in one-letter code: Ribosomal protein uS12 methylthiotransferase RimO (449 aa).

The 117-residue stretch at 7–123 (QKVSMVSLGC…VAEILAEHHA (117 aa)) folds into the MTTase N-terminal domain. The [4Fe-4S] cluster site is built by Cys-16, Cys-52, Cys-86, Cys-161, Cys-165, and Cys-168. In terms of domain architecture, Radical SAM core spans 147–377 (SSPGWYAYLK…MKTQARVSFR (231 aa)). One can recognise a TRAM domain in the interval 380–448 (RAMVGQTEQV…DYDLVAEMIE (69 aa)).

Belongs to the methylthiotransferase family. RimO subfamily. [4Fe-4S] cluster is required as a cofactor.

Its subcellular location is the cytoplasm. The enzyme catalyses L-aspartate(89)-[ribosomal protein uS12]-hydrogen + (sulfur carrier)-SH + AH2 + 2 S-adenosyl-L-methionine = 3-methylsulfanyl-L-aspartate(89)-[ribosomal protein uS12]-hydrogen + (sulfur carrier)-H + 5'-deoxyadenosine + L-methionine + A + S-adenosyl-L-homocysteine + 2 H(+). Catalyzes the methylthiolation of an aspartic acid residue of ribosomal protein uS12. The chain is Ribosomal protein uS12 methylthiotransferase RimO from Trichlorobacter lovleyi (strain ATCC BAA-1151 / DSM 17278 / SZ) (Geobacter lovleyi).